Consider the following 368-residue polypeptide: Proteinase-activated receptor 3 (368 aa).

Residues methionine 1 to cysteine 21 form the signal peptide. A propeptide spans glutamine 22–glutamate 37 (removed for receptor activation). Residues serine 38–lysine 93 lie on the Extracellular side of the membrane. A glycan (N-linked (GlcNAc...) asparagine) is linked at asparagine 80. Residues valine 94–leucine 114 traverse the membrane as a helical segment. The Cytoplasmic segment spans residues tryptophan 115 to serine 123. The helical transmembrane segment at isoleucine 124–leucine 144 threads the bilayer. Residues proline 145–valine 166 are Extracellular-facing. A disulfide bond links cysteine 164 and cysteine 243. A helical membrane pass occupies residues threonine 167–isoleucine 187. The Cytoplasmic portion of the chain corresponds to asparagine 188–threonine 208. Residues leucine 209–leucine 229 form a helical membrane-spanning segment. Over lysine 230 to glutamine 257 the chain is Extracellular. The helical transmembrane segment at phenylalanine 258–phenylalanine 278 threads the bilayer. The Cytoplasmic portion of the chain corresponds to cysteine 279 to alanine 300. Residues valine 301 to isoleucine 321 traverse the membrane as a helical segment. The Extracellular portion of the chain corresponds to histidine 322–tyrosine 338. A helical membrane pass occupies residues leucine 339–methionine 359. Topologically, residues serine 360–serine 368 are cytoplasmic.

Belongs to the G-protein coupled receptor 1 family. As to quaternary structure, interacts with INSC/inscuteable and GPSM2. In terms of processing, a proteolytic cleavage generates a new N-terminus that functions as a tethered ligand.

The protein resides in the cell membrane. Its function is as follows. Receptor for activated thrombin coupled to G proteins that stimulate phosphoinositide hydrolysis. In Rattus norvegicus (Rat), this protein is Proteinase-activated receptor 3 (F2rl2).